We begin with the raw amino-acid sequence, 314 residues long: Short-chain dehydrogenase/reductase drtF (314 aa).

The NADP(+) site is built by V26, K50, D73, N100, Y185, and K189. Y185 (proton acceptor) is an active-site residue. Catalysis depends on K189, which acts as the Lowers pKa of active site Tyr.

It belongs to the short-chain dehydrogenases/reductases (SDR) family.

It participates in secondary metabolite biosynthesis; terpenoid biosynthesis. Functionally, short-chain dehydrogenase/reductase; part of the gene cluster that mediates the biosynthesis of various drimane-type sesquiterpene esters, compounds that exhibit diverse biological activities and are widely present in eukaryotes. The pathway begins with the synthesis of the backbone drimenol by the terpene cyclase drtB using farnesyl pyrophosphate (FPP) as substrate. The cytochrome P450 monooxygenase drtD is then responsible for the hydroxylations at C-6, C-9 and C-12, as well as the oxidation of hydroxyl groups at C-6 and C-11 to a ketone and an aldehyde, respectively. Then, the biosynthesis can go in two directions, either the hydroxylated drimenol is further hydroxylated at C-2 and C-3 by an enzyme(s) not associated with the drt cluster, or the FAD-binding oxidoreductase drtC further oxidizes C-11 or C-12 to form the butyrolactone ring. DrtB, drtD and drtC are solely responsible for the formation of the different drimane structures observed during drimane sesquiterpenes biosynthesis. The polyketide synthase drtA synthesizes different lengths (C6 and C8) of PKS chains, which are then oxidized to varying degrees by the short-chain dehydrogenase drtF. Finally, these PKS chains are transferred onto drimane sesquiterpenes by the acyltransferase drtE, forming the sesquiterpene esters. In addition to the different fatty acyl-CoA chains produced by drtA, drtE is also able to use cinnamoyl-CoA as a substrate. The chain is Short-chain dehydrogenase/reductase drtF from Aspergillus calidoustus.